Reading from the N-terminus, the 191-residue chain is Pyridoxal 5'-phosphate synthase subunit PdxT (191 aa).

An L-glutamine-binding site is contributed by 48–50 (GES). Catalysis depends on C79, which acts as the Nucleophile. Residues R106 and 134–135 (IR) each bind L-glutamine. Catalysis depends on charge relay system residues H170 and E172.

It belongs to the glutaminase PdxT/SNO family. In terms of assembly, in the presence of PdxS, forms a dodecamer of heterodimers. Only shows activity in the heterodimer.

It carries out the reaction aldehydo-D-ribose 5-phosphate + D-glyceraldehyde 3-phosphate + L-glutamine = pyridoxal 5'-phosphate + L-glutamate + phosphate + 3 H2O + H(+). It catalyses the reaction L-glutamine + H2O = L-glutamate + NH4(+). It participates in cofactor biosynthesis; pyridoxal 5'-phosphate biosynthesis. Its function is as follows. Catalyzes the hydrolysis of glutamine to glutamate and ammonia as part of the biosynthesis of pyridoxal 5'-phosphate. The resulting ammonia molecule is channeled to the active site of PdxS. The chain is Pyridoxal 5'-phosphate synthase subunit PdxT from Oenococcus oeni (strain ATCC BAA-331 / PSU-1).